A 430-amino-acid chain; its full sequence is Small ribosomal subunit protein uS3m (430 aa).

Belongs to the universal ribosomal protein uS3 family.

The protein localises to the mitochondrion. The protein is Small ribosomal subunit protein uS3m (RPS3) of Marchantia polymorpha (Common liverwort).